A 277-amino-acid chain; its full sequence is Undecaprenyl-diphosphatase (277 aa).

5 helical membrane-spanning segments follow: residues 83–103, 109–129, 188–208, 218–238, and 256–276; these read FALNIIIAFLPAALLGLVFAS, LFAPVPVAIAFIVGGFIILWI, ATEFSFFLAIPTLMGATVYSV, ADIPLFGLGGFAAFVSAFLCV, and YRIVFGLFVLLSAYYGWVVWA.

It belongs to the UppP family.

The protein localises to the cell inner membrane. The catalysed reaction is di-trans,octa-cis-undecaprenyl diphosphate + H2O = di-trans,octa-cis-undecaprenyl phosphate + phosphate + H(+). Catalyzes the dephosphorylation of undecaprenyl diphosphate (UPP). Confers resistance to bacitracin. This is Undecaprenyl-diphosphatase from Janthinobacterium sp. (strain Marseille) (Minibacterium massiliensis).